The primary structure comprises 352 residues: tRNA pseudouridine synthase D (352 aa).

The Nucleophile role is filled by aspartate 81. The TRUD domain maps to 157–303 (GVPNYFGTQR…MDHERRILRL (147 aa)).

The protein belongs to the pseudouridine synthase TruD family.

The enzyme catalyses uridine(13) in tRNA = pseudouridine(13) in tRNA. Functionally, responsible for synthesis of pseudouridine from uracil-13 in transfer RNAs. The polypeptide is tRNA pseudouridine synthase D (Pseudomonas putida (strain ATCC 700007 / DSM 6899 / JCM 31910 / BCRC 17059 / LMG 24140 / F1)).